The primary structure comprises 219 residues: Ribonuclease HII (219 aa).

Positions 22 to 219 (GLVAGVDEVG…LLAMRMEAVV (198 aa)) constitute an RNase H type-2 domain. A divalent metal cation is bound by residues D28, E29, and D125.

This sequence belongs to the RNase HII family. Mn(2+) is required as a cofactor. Mg(2+) serves as cofactor.

It localises to the cytoplasm. It carries out the reaction Endonucleolytic cleavage to 5'-phosphomonoester.. In terms of biological role, endonuclease that specifically degrades the RNA of RNA-DNA hybrids. The sequence is that of Ribonuclease HII from Granulibacter bethesdensis (strain ATCC BAA-1260 / CGDNIH1).